The primary structure comprises 256 residues: Short-chain dehydrogenase/reductase cdmF (256 aa).

NADP(+) contacts are provided by valine 11, aspartate 57, and arginine 119. Serine 137 acts as the Proton donor in catalysis. Tyrosine 151, lysine 155, glycine 183, and asparagine 187 together coordinate NADP(+). Tyrosine 151 acts as the Proton acceptor in catalysis. Residue lysine 155 is the Lowers pKa of active site Tyr of the active site.

Belongs to the short-chain dehydrogenases/reductases (SDR) family.

The catalysed reaction is 3-hydroxypentacecilide A + A = chrodrimanin C + AH2. The enzyme catalyses chrodrimanin F + A = chrodrimanin H + AH2. It participates in secondary metabolite biosynthesis; terpenoid biosynthesis. Its function is as follows. Short-chain dehydrogenase/reductase; part of the gene cluster that mediates the biosynthesis of chrodrimanin B, a meroterpenoid that acts as a potent blocker of insect GABA-gated chloride channels. The first step of the pathway is the biosynthesis of 6-hydroxymellein by the polyketide synthase cdmE. The prenyltransferase cdmH acts as a 6-hydroxymellein 5-farnesyltransferase and produces the hydrophobic metabolite verruculide C. The FAD-dependent monooxygenase cdmI further converts verruculide C into verruculide B. The terpene cyclase cdmG then produced the pentacyclic molecule 3-hydroxypentacecilide A, the backbone structure of chrodrimanin B, via folding the farnesyl moiety of the substrate into the chair-boat conformation. The short-chain dehydrogenase/reductase cdmF functions as the 3-OH dehydrogenase that oxidizes the C-3 hydroxyl group of 3-hydroxypentacecilide A and produces chrodrimanin C, the dehydrogenated product of 3-hydroxypentacecilide A. The cytochrome P450 monooxygenase cdmJ then accepts both 3-hydroxypentacecilide A and chrodrimanin C and functions as a C-7-beta-hydroxylase to produce respectively chrodrimanin H and chrodrimanin F. The dioxygenase cdmA accepts chrodrimanin H to afford chrodrimanin E, which is further transformed to chrodrimanin A by the dioxygenase cdmD. CdmA can also accept chrodrimanin C as substrate to convert it into verruculide A, which is further converted into chrodrimanin T by cdmD. The last step of the biosynthesis is proposed to be performed by the acetyltransferase cdmC which acetylates chrodrimanin A to yield chrodrimanin B. The pathway may also lead to the production of additional shunt products, including chrodrimanins T and U. This chain is Short-chain dehydrogenase/reductase cdmF, found in Talaromyces verruculosus (Penicillium verruculosum).